We begin with the raw amino-acid sequence, 916 residues long: Calcium homeostasis endoplasmic reticulum protein (916 aa).

Met-1 carries the N-acetylmethionine modification. One copy of the SURP motif repeat lies at 15–57 (VIDKLAQFVARNGPEFEKMTMEKQKDNPKFSFLFGGEFYSYYK). Lys-18 carries the N6-acetyllysine modification. The region spanning 149-289 (ETQLDMNEFD…QLQSPALGLG (141 aa)) is the CID domain. Disordered stretches follow at residues 336–549 (QQQQ…RFPP) and 601–635 (HPPWAGPQHPDFGPPPHGFNGQPPHMRRQGPPHIN). The segment covering 354–374 (TPPPPAPPPAPAPAPAIPPTT) has biased composition (pro residues). The span at 480-501 (WNNQPDAAWNSQFEGPWNSQHE) shows a compositional bias: polar residues. Over residues 525–541 (PFPPHQQHPQFNQPPHP) the composition is skewed to pro residues. A Phosphotyrosine modification is found at Tyr-714. Residues 722-878 (RARRRKGQEK…DPIKGGDVRD (157 aa)) are disordered. Positions 739–749 (SRSRSKSRGRS) are enriched in basic residues. A compositionally biased stretch (low complexity) spans 750–766 (SSRSNSRSSKSSGSYSR). Over residues 767–815 (SRSRSCSRSYSRSRSRSRSRSRSSRSRSRSQSRSRSKSYSPGRRRRSRS) the composition is skewed to basic residues. Residues Ser-813, Ser-815, and Ser-817 each carry the phosphoserine modification. A Phosphothreonine modification is found at Thr-819. A Phosphoserine modification is found at Ser-828. The region spanning 841-891 (EENKGHQMLVKMGWSGSGGLGAKEQGIQDPIKGGDVRDKWDQYKGVGVALD) is the G-patch domain. A Glycyl lysine isopeptide (Lys-Gly) (interchain with G-Cter in SUMO2) cross-link involves residue Lys-844. A phosphoserine mark is found at Ser-855 and Ser-857. Lys-872 participates in a covalent cross-link: Glycyl lysine isopeptide (Lys-Gly) (interchain with G-Cter in SUMO2). Lys-879 is modified (N6-acetyllysine). Residue Ser-904 is modified to Phosphoserine.

As to expression, expressed in brain, placenta, lung, liver, kidney, pancreas, cardiac and skeletal muscle, and in cultured HEL and Dami cells.

The protein localises to the cytoplasm. It is found in the perinuclear region. Its subcellular location is the endoplasmic reticulum. Its function is as follows. Involved in calcium homeostasis, growth and proliferation. The chain is Calcium homeostasis endoplasmic reticulum protein from Homo sapiens (Human).